Reading from the N-terminus, the 331-residue chain is Inner membrane ABC transporter permease protein YjfF (331 aa).

Topologically, residues 1–5 (MIKRN) are cytoplasmic. Residues 6-26 (LPLMITIGVFVLGYLYCLTQF) traverse the membrane as a helical segment. Topologically, residues 27-42 (PGFASTRVICNILTDN) are periplasmic. Residues 43-63 (AFLGIIAVGMTFVILSGGIDL) traverse the membrane as a helical segment. Over 64-88 (SVGSVIAFTGVFLAKVIGDFGLSPL) the chain is Cytoplasmic. Residues 89–109 (LAFPLVLVMGCAFGAFMGLLI) traverse the membrane as a helical segment. Residues 110-113 (DALK) are Periplasmic-facing. A helical membrane pass occupies residues 114 to 134 (IPAFIITLAGMFFLRGVSYLV). Residues 135–159 (SEESIPINHPIYDTLSSLAWKIPGG) are Cytoplasmic-facing. The chain crosses the membrane as a helical span at residues 160–180 (GRLSAMGLLMLAVVVIGIFLA). The Periplasmic portion of the chain corresponds to 181 to 222 (HRTRFGNQVYAIGGNATSANLMGISTRSTTIRIYMLSTGLAT). Residues 223-243 (LAGIVFSIYTQAGYALAGVGV) form a helical membrane-spanning segment. Topologically, residues 244–250 (ELDAIAS) are cytoplasmic. A helical transmembrane segment spans residues 251 to 271 (VVIGGTLLSGGVGTVLGTLFG). The Periplasmic portion of the chain corresponds to 272 to 294 (VAIQGLIQTYINFDGTLSSWWTK). A helical transmembrane segment spans residues 295-315 (IAIGILLFIFIALQRGLTVLW). The Cytoplasmic segment spans residues 316 to 331 (ENRQSSPVTRVNIAQQ).

Belongs to the binding-protein-dependent transport system permease family. AraH/RbsC subfamily. As to quaternary structure, the complex is composed of two ATP-binding proteins (YtfR), two transmembrane proteins (YtfT and YjfF) and a solute-binding protein (YtfQ).

Its subcellular location is the cell inner membrane. In terms of biological role, part of the ABC transporter complex YtfQRT-YjfF involved in galactofuranose transport. Probably responsible for the translocation of the substrate across the membrane. The polypeptide is Inner membrane ABC transporter permease protein YjfF (yjfF) (Escherichia coli (strain K12)).